A 251-amino-acid polypeptide reads, in one-letter code: Probable transcriptional regulatory protein RSal33209_2002 (251 aa).

The protein belongs to the TACO1 family.

Its subcellular location is the cytoplasm. This Renibacterium salmoninarum (strain ATCC 33209 / DSM 20767 / JCM 11484 / NBRC 15589 / NCIMB 2235) protein is Probable transcriptional regulatory protein RSal33209_2002.